We begin with the raw amino-acid sequence, 156 residues long: Ribosome maturation factor RimP (156 aa).

Belongs to the RimP family.

It is found in the cytoplasm. Its function is as follows. Required for maturation of 30S ribosomal subunits. The chain is Ribosome maturation factor RimP from Shouchella clausii (strain KSM-K16) (Alkalihalobacillus clausii).